The chain runs to 213 residues: Large ribosomal subunit protein uL1 (213 aa).

It belongs to the universal ribosomal protein uL1 family. As to quaternary structure, part of the 50S ribosomal subunit.

In terms of biological role, binds directly to 23S rRNA. Probably involved in E site tRNA release. Its function is as follows. Protein L1 is also a translational repressor protein, it controls the translation of its operon by binding to its mRNA. The chain is Large ribosomal subunit protein uL1 from Methanococcus maripaludis (strain C6 / ATCC BAA-1332).